We begin with the raw amino-acid sequence, 409 residues long: uncharacterized protein (409 aa).

The first 29 residues, 1–29 (MARSRCVHRVVHQAACIGVIGLSTSALTT), serve as a signal peptide directing secretion. Residue cysteine 30 is the site of N-palmitoyl cysteine attachment. Residue cysteine 30 is the site of S-diacylglycerol cysteine attachment.

The protein belongs to the TP013X lipoprotein family.

The protein resides in the cell membrane. This is an uncharacterized protein from Treponema pallidum (strain Nichols).